Consider the following 379-residue polypeptide: Homoserine O-succinyltransferase (379 aa).

An AB hydrolase-1 domain is found at 51 to 360 (NAVLICHALS…DAPQGHDAFL (310 aa)). Residue Ser157 is the Nucleophile of the active site. Position 227 (Arg227) interacts with substrate. Residues Asp323 and His356 contribute to the active site. Asp357 serves as a coordination point for substrate.

The protein belongs to the AB hydrolase superfamily. MetX family. As to quaternary structure, homodimer.

The protein localises to the cytoplasm. It carries out the reaction L-homoserine + succinyl-CoA = O-succinyl-L-homoserine + CoA. It functions in the pathway amino-acid biosynthesis; L-methionine biosynthesis via de novo pathway; O-succinyl-L-homoserine from L-homoserine: step 1/1. Transfers a succinyl group from succinyl-CoA to L-homoserine, forming succinyl-L-homoserine. The polypeptide is Homoserine O-succinyltransferase (Pseudomonas fluorescens (strain SBW25)).